The chain runs to 428 residues: 3-phosphoshikimate 1-carboxyvinyltransferase (428 aa).

Residues Lys19, Ser20, and Arg24 each contribute to the 3-phosphoshikimate site. Lys19 serves as a coordination point for phosphoenolpyruvate. Positions 91 and 119 each coordinate phosphoenolpyruvate. Residues Ser164, Gln166, Asp312, and Lys339 each contribute to the 3-phosphoshikimate site. Residue Gln166 participates in phosphoenolpyruvate binding. The Proton acceptor role is filled by Asp312. Phosphoenolpyruvate contacts are provided by Arg343 and Arg386.

Belongs to the EPSP synthase family. As to quaternary structure, monomer.

The protein localises to the cytoplasm. The enzyme catalyses 3-phosphoshikimate + phosphoenolpyruvate = 5-O-(1-carboxyvinyl)-3-phosphoshikimate + phosphate. It functions in the pathway metabolic intermediate biosynthesis; chorismate biosynthesis; chorismate from D-erythrose 4-phosphate and phosphoenolpyruvate: step 6/7. Catalyzes the transfer of the enolpyruvyl moiety of phosphoenolpyruvate (PEP) to the 5-hydroxyl of shikimate-3-phosphate (S3P) to produce enolpyruvyl shikimate-3-phosphate and inorganic phosphate. This is 3-phosphoshikimate 1-carboxyvinyltransferase from Bacillus subtilis (strain 168).